The chain runs to 333 residues: Probable tRNA-dihydrouridine synthase 1 (333 aa).

FMN-binding positions include Pro-17 to Ala-19 and Gln-71. The Proton donor role is filled by Cys-102. FMN contacts are provided by residues Lys-141, Asn-202–Asp-204, and Gly-226–Arg-227.

This sequence belongs to the Dus family. FMN serves as cofactor.

It catalyses the reaction a 5,6-dihydrouridine in tRNA + NAD(+) = a uridine in tRNA + NADH + H(+). The enzyme catalyses a 5,6-dihydrouridine in tRNA + NADP(+) = a uridine in tRNA + NADPH + H(+). Its function is as follows. Catalyzes the synthesis of 5,6-dihydrouridine (D), a modified base found in the D-loop of most tRNAs, via the reduction of the C5-C6 double bond in target uridines. This Bacillus subtilis (strain 168) protein is Probable tRNA-dihydrouridine synthase 1 (dus1).